We begin with the raw amino-acid sequence, 692 residues long: MERLRQIASQATAASAAPARPAHPLDPLSTAEIKAATNTVKSYFAGKKISFNTVTLREPARKAYIQWKEQGGPLPPRLAYYVILEAGKPGVKEGLVDLASLSVIETRALETVQPILTVEDLCSTEEVIRNDPAVIEQCVLSGIPANEMHKVYCDPWTIGYDERWGTGKRLQQALVYYRSDEDDSQYSHPLDFCPIVDTEEKKVIFIDIPNRRRKVSKHKHANFYPKHMIEKVGAMRPEAPPINVTQPEGVSFKMTGNVMEWSNFKFHIGFNYREGIVLSDVSYNDHGNVRPIFHRISLSEMIVPYGSPEFPHQRKHALDIGEYGAGYMTNPLSLGCDCKGVIHYLDAHFSDRAGDPITVKNAVCIHEEDDGLLFKHSDFRDNFATSLVTRATKLVVSQIFTAANYEYCLYWVFMQDGAIRLDIRLTGILNTYILGDDEEAGPWGTRVYPNVNAHNHQHLFSLRIDPRIDGDGNSAAACDAKSSPYPLGSPENMYGNAFYSEKTTFKTVKDSLTNYESATGRSWDIFNPNKVNPYSGKPPSYKLVSTQCPPLLAKEGSLVAKRAPWASHSVNVVPYKDNRLYPSGDHVPQWSGDGVRGMREWIGDGSENIDNTDILFFHTFGITHFPAPEDFPLMPAEPITLMLRPRHFFTENPGLDIQPSYAMTTSEAKRAVHKETKDKTSRLAFEGSCCGK.

The span at methionine 1–alanine 22 shows a compositional bias: low complexity. The tract at residues methionine 1–aspartate 26 is disordered. N-linked (GlcNAc...) asparagine glycosylation is present at asparagine 243. Alanine 317 to methionine 328 is a substrate binding site. Aspartate 319 acts as the Proton acceptor in catalysis. Cysteines 338 and 364 form a disulfide. Substrate is bound at residue alanine 402–tyrosine 407. Tyrosine 405 functions as the Schiff-base intermediate with substrate; via topaquinone in the catalytic mechanism. Tyrosine 405 carries the post-translational modification 2',4',5'-topaquinone. 2 residues coordinate Cu cation: histidine 456 and histidine 458. Positions 465, 613, and 614 each coordinate Mn(2+). Position 624 (histidine 624) interacts with Cu cation.

This sequence belongs to the copper/topaquinone oxidase family. Homodimer. Cu cation is required as a cofactor. Zn(2+) serves as cofactor. The cofactor is L-topaquinone. It depends on Mn(2+) as a cofactor. In terms of processing, topaquinone (TPQ) is generated by copper-dependent autoxidation of a specific tyrosyl residue.

It is found in the peroxisome. The enzyme catalyses a primary methyl amine + O2 + H2O = an aldehyde + H2O2 + NH4(+). This Pichia angusta (Yeast) protein is Peroxisomal primary amine oxidase (AMO).